The chain runs to 407 residues: MRVLLATCGSRGDTEPLVALAVRVRDLGADVRMCAPPDCAERLAEVGVPHVPVGPSARAPIQRAKPLTAEDVRRFTTEAIATQFDEIPAAAEGCAAVVTTGLLAAAIGVRSVAEKLGIPYFYAFHCPSYVPSPYYPPPPLGEPSTQDTIDIPAQWERNNQSAYQRYGGLLNSHRDAIGLPPVEDIFTFGYTDHPWVAADPVLAPLQPTDLDAVQTGAWILPDERPLSPELAAFLDAGPPPVYLGFGSLGAPADAVRVAIDAIRAHGRRVILSRGWADLVLPDDGADCFAIGEVNHQVLFGRVAAVIHHGGAGTTHVAARAGAPQILLPQMADQPYYAGRVAELGVGVAHDGPIPTFDSLSAALATALTPETHARATAVAGTIRTDGAAVAARLLLDAVSREKPTVSA.

This sequence belongs to the glycosyltransferase 28 family.

The catalysed reaction is vancomycin aglycone + UDP-alpha-D-glucose = devancoaminyl-vancomycin + UDP. The protein operates within antibiotic biosynthesis; vancomycin biosynthesis. Glucosyltransferase that transfers glucose to the 4-OH-Phegly(4) residue of vancomycin aglycone (AGV) to produce devancoaminyl-vancomycin (DVV) in the biosynthesis of glycopeptide antibiotic chloroeremomycin, a member of the vancomycin group of antibiotics. This is Vancomycin aglycone glucosyltransferase (gtfB) from Amycolatopsis orientalis (Nocardia orientalis).